The chain runs to 365 residues: MMGRRRAFAVDGRDGAGEGLARGCIVPGVTSTYRRIPDAAHGCSSWERGDKFRGVGREALFLKLASRDSGVEMAVGDSPLAALPGLSQDSLDFESSGSSEPPAQVGRLLASQKLGEVLERSRRLPTAPTSLSGQHRSLRLASKPEREVPLGAGQQESMEADTDLEAGLEEEAVGGLGPGAWACLPGQGLRYLEHLCLVLEQMARLQQLYLQLRIQRPPGDPGEEESTRAPLPSPLHTPGNRGQGPWELLSQTEHTGAKAASPPKVEVPSANPPRLPETPVEPTYHLPSSQGHKRDISHWDKVKVLLNRICRRSHHHPEPPAPPDGSDPRIESRDLPERPQCRPHRKTFMPSLVVKKQRAKNLSVG.

3 disordered regions span residues 119 to 157 (ERSR…QQES), 216 to 298 (RPPG…DISH), and 313 to 365 (SHHH…LSVG). Over residues 326–340 (SDPRIESRDLPERPQ) the composition is skewed to basic and acidic residues.

This is an uncharacterized protein from Homo sapiens (Human).